A 540-amino-acid chain; its full sequence is Putative cysteine ligase BshC (540 aa).

Residues 457-477 (EKNRAFIQGQIAFLKERMERE) adopt a coiled-coil conformation.

The protein belongs to the BshC family.

Functionally, involved in bacillithiol (BSH) biosynthesis. May catalyze the last step of the pathway, the addition of cysteine to glucosamine malate (GlcN-Mal) to generate BSH. This is Putative cysteine ligase BshC from Shouchella clausii (strain KSM-K16) (Alkalihalobacillus clausii).